Reading from the N-terminus, the 322-residue chain is Lipoyl synthase (322 aa).

Polar residues predominate over residues 1-14; it reads MKTLDENQAPSRQT. The segment at 1 to 30 is disordered; that stretch reads MKTLDENQAPSRQTPESHRRGAEKLSRIPV. The segment covering 15–26 has biased composition (basic and acidic residues); sequence PESHRRGAEKLS. Cys-70, Cys-75, Cys-81, Cys-96, Cys-100, Cys-103, and Ser-310 together coordinate [4Fe-4S] cluster. The Radical SAM core domain occupies 82–299; that stretch reads FGHGTATFMI…AGYARELGFA (218 aa).

It belongs to the radical SAM superfamily. Lipoyl synthase family. It depends on [4Fe-4S] cluster as a cofactor.

It is found in the cytoplasm. It carries out the reaction [[Fe-S] cluster scaffold protein carrying a second [4Fe-4S](2+) cluster] + N(6)-octanoyl-L-lysyl-[protein] + 2 oxidized [2Fe-2S]-[ferredoxin] + 2 S-adenosyl-L-methionine + 4 H(+) = [[Fe-S] cluster scaffold protein] + N(6)-[(R)-dihydrolipoyl]-L-lysyl-[protein] + 4 Fe(3+) + 2 hydrogen sulfide + 2 5'-deoxyadenosine + 2 L-methionine + 2 reduced [2Fe-2S]-[ferredoxin]. It participates in protein modification; protein lipoylation via endogenous pathway; protein N(6)-(lipoyl)lysine from octanoyl-[acyl-carrier-protein]: step 2/2. Functionally, catalyzes the radical-mediated insertion of two sulfur atoms into the C-6 and C-8 positions of the octanoyl moiety bound to the lipoyl domains of lipoate-dependent enzymes, thereby converting the octanoylated domains into lipoylated derivatives. The protein is Lipoyl synthase of Methylococcus capsulatus (strain ATCC 33009 / NCIMB 11132 / Bath).